Reading from the N-terminus, the 143-residue chain is Large ribosomal subunit protein uL15 (143 aa).

A disordered region spans residues 1–54 (MELNSIKPAEGAKHAKRRVGRGIGSGLGKTAGRGHKGQKSRSGGYHKVGFEGGQ). The span at 21 to 31 (RGIGSGLGKTA) shows a compositional bias: gly residues.

It belongs to the universal ribosomal protein uL15 family. As to quaternary structure, part of the 50S ribosomal subunit.

In terms of biological role, binds to the 23S rRNA. In Paracidovorax citrulli (strain AAC00-1) (Acidovorax citrulli), this protein is Large ribosomal subunit protein uL15.